The chain runs to 468 residues: Peroxisome proliferator-activated receptor alpha (468 aa).

The segment at residues 99–173 (NIECRICGDK…VGMSHNAIRF (75 aa)) is a DNA-binding region (nuclear receptor). NR C4-type zinc fingers lie at residues 102–122 (CRIC…CEGC) and 139–161 (CDRS…FHKC). The 228-residue stretch at 239–466 (FVIHDMETLC…HPLLQEIYRD (228 aa)) folds into the NR LBD domain. The interval 304–433 (DQVTLLKYGV…PKLLQKMVDL (130 aa)) is required for heterodimerization with RXRA.

This sequence belongs to the nuclear hormone receptor family. NR1 subfamily. In terms of assembly, heterodimer; with RXRA. This heterodimerization is required for DNA binding and transactivation activity. Interacts with NCOA3 coactivator. Interacts with CITED2; the interaction stimulates its transcriptional activity. Also interacts with PPARBP in vitro. Interacts with AKAP13, LPIN1, PRDM16 and coactivator NCOA6. Interacts with ASXL1 and ASXL2. Interacts with PER2. Interacts with SIRT1; the interaction seems to be modulated by NAD(+) levels. Interacts with CRY1 and CRY2. In hepatocytes, interacts with PAQR3 and HUWE1; the interactions promote PPARA poylubiquitination and HUWE1-mediated degradation. Ubiquitinated by E3 ubiquitin-protein ligase HUWE1; leading to proteasomal degradation. Post-translationally, phosphorylated. In terms of tissue distribution, highly expressed in liver, kidney and heart. Very weakly expressed in brain and testis.

It localises to the nucleus. Ligand-activated transcription factor. Key regulator of lipid metabolism. Activated by the endogenous ligand 1-palmitoyl-2-oleoyl-sn-glycerol-3-phosphocholine (16:0/18:1-GPC). Activated by oleylethanolamide, a naturally occurring lipid that regulates satiety. Receptor for peroxisome proliferators such as hypolipidemic drugs and fatty acids. Regulates the peroxisomal beta-oxidation pathway of fatty acids. Functions as a transcription activator for the ACOX1 and P450 genes. Transactivation activity requires heterodimerization with RXRA and is antagonized by NR2C2. May be required for the propagation of clock information to metabolic pathways regulated by PER2. This Mus musculus (Mouse) protein is Peroxisome proliferator-activated receptor alpha (Ppara).